The following is a 248-amino-acid chain: MKIDVLTLFPEMFQSPFEESIFKRAADKNLVRLEIHNFRDFSHDKHHAVDDTPYGGGAGMLLKPEPLFEAVEAVMEKDPTPAPVILLSPQGRTFNQSVARELANHQRLIIICGHYEGFDERVREHLATDEISIGDFVLTGGELAAMVVIDAVSRLIPGVLGSDDSSESDSHSNGLLEHPHYTRPPVFRGWDIPEVLLSGNHARIDRWRRKESLRRTLKRRPDMLEKITLSKADRKLIDEILAEENPKD.

Residues glycine 113 and 133–138 (IGDFVL) contribute to the S-adenosyl-L-methionine site.

The protein belongs to the RNA methyltransferase TrmD family. As to quaternary structure, homodimer.

It localises to the cytoplasm. It catalyses the reaction guanosine(37) in tRNA + S-adenosyl-L-methionine = N(1)-methylguanosine(37) in tRNA + S-adenosyl-L-homocysteine + H(+). Specifically methylates guanosine-37 in various tRNAs. This is tRNA (guanine-N(1)-)-methyltransferase from Dehalococcoides mccartyi (strain ATCC BAA-2266 / KCTC 15142 / 195) (Dehalococcoides ethenogenes (strain 195)).